A 217-amino-acid chain; its full sequence is tRNA (guanine-N(7)-)-methyltransferase (217 aa).

Glutamate 44, glutamate 69, aspartate 96, and aspartate 118 together coordinate S-adenosyl-L-methionine. Aspartate 118 is an active-site residue. Substrate-binding positions include lysine 122, aspartate 154, and 191–194 (TEYE).

Belongs to the class I-like SAM-binding methyltransferase superfamily. TrmB family.

It catalyses the reaction guanosine(46) in tRNA + S-adenosyl-L-methionine = N(7)-methylguanosine(46) in tRNA + S-adenosyl-L-homocysteine. The protein operates within tRNA modification; N(7)-methylguanine-tRNA biosynthesis. Functionally, catalyzes the formation of N(7)-methylguanine at position 46 (m7G46) in tRNA. This Bacillus cereus (strain B4264) protein is tRNA (guanine-N(7)-)-methyltransferase.